Consider the following 299-residue polypeptide: MSKYSTIAPTERLPEWLRRPIGDASALERVQGLVKQNRLHTICEEGRCPNRGECYAAGTATFLLGGSICTRSCAFCQVEKGQAPMAVDPAEAQRVADAVEAMQLRYVVLTAVARDDLADHGAALFTTTMEAIRARNPLIAIEVLTPDFWGGCPDPQQAVAAQRERLSTVLAADPVCFNHNLETVQRLQGEVRRGATYERSLGLLAACRELAPTIPTKSGLMLGLGESRDEVIAAMRDLRAVDCQRLTLGQYLRPSLAHIPVDRYWTPEEFDELGAVARDLGFAQVRSGPLVRSSYHAAD.

[4Fe-4S] cluster is bound by residues C43, C48, C54, C69, C73, C76, and S294. The 229-residue stretch at 55–283 folds into the Radical SAM core domain; the sequence is YAAGTATFLL…GAVARDLGFA (229 aa).

This sequence belongs to the radical SAM superfamily. Lipoyl synthase family. [4Fe-4S] cluster serves as cofactor.

It is found in the cytoplasm. The enzyme catalyses [[Fe-S] cluster scaffold protein carrying a second [4Fe-4S](2+) cluster] + N(6)-octanoyl-L-lysyl-[protein] + 2 oxidized [2Fe-2S]-[ferredoxin] + 2 S-adenosyl-L-methionine + 4 H(+) = [[Fe-S] cluster scaffold protein] + N(6)-[(R)-dihydrolipoyl]-L-lysyl-[protein] + 4 Fe(3+) + 2 hydrogen sulfide + 2 5'-deoxyadenosine + 2 L-methionine + 2 reduced [2Fe-2S]-[ferredoxin]. It participates in protein modification; protein lipoylation via endogenous pathway; protein N(6)-(lipoyl)lysine from octanoyl-[acyl-carrier-protein]: step 2/2. Catalyzes the radical-mediated insertion of two sulfur atoms into the C-6 and C-8 positions of the octanoyl moiety bound to the lipoyl domains of lipoate-dependent enzymes, thereby converting the octanoylated domains into lipoylated derivatives. This is Lipoyl synthase 2 from Parasynechococcus marenigrum (strain WH8102).